A 217-amino-acid chain; its full sequence is Secreted RxLR effector protein 147 (217 aa).

The first 23 residues, 1–23 (MRGAFYVTTALLITNSIRTAAEA), serve as a signal peptide directing secretion. Residues 22 to 52 (EANPPGRQPMSHHDGVVPGKSSPRRFLQGSH) are disordered. A RxLR-dEER motif is present at residues 46-67 (RFLQGSHEPHDKFAVSAANEER).

Belongs to the RxLR effector family.

It is found in the secreted. The protein localises to the host nucleus. Its subcellular location is the host cytoplasm. In terms of biological role, secreted effector that completely suppresses the host cell death induced by cell death-inducing proteins. The chain is Secreted RxLR effector protein 147 from Plasmopara viticola (Downy mildew of grapevine).